The primary structure comprises 2792 residues: E3 ubiquitin-protein ligase UBR5 (2792 aa).

N-acetylthreonine is present on Thr2. Basic and acidic residues predominate over residues 77–88 (DRLELGKPDNND). Positions 77-175 (DRLELGKPDN…DRGSGLLGSQ (99 aa)) are disordered. Positions 94-111 (SSSGTGRTSRPGRTSDSP) are enriched in low complexity. Ser110 is modified (phosphoserine). A compositionally biased stretch (gly residues) spans 135–144 (GVGGSGGGSS). In terms of domain architecture, UBA spans 184–226 (VIPEELISQAQVVLQGKSRSVIIRELQRTNLDVNLAVNNLLSR). Ser321 bears the Phosphoserine mark. Residues 322-341 (FDNERGSTSKEGESNPDKKN) are compositionally biased toward basic and acidic residues. Residues 322-347 (FDNERGSTSKEGESNPDKKNTPVQSP) are disordered. 2 positions are modified to phosphoserine: Ser346 and Ser572. Positions 577–598 (KSMEKASKTLETKPESKQEPVK) are enriched in basic and acidic residues. The segment at 577 to 642 (KSMEKASKTL…APREEEKVNE (66 aa)) is disordered. At Ser606 the chain carries Phosphoserine. Residues 608-622 (ASTCSDASSIASSAS) are compositionally biased toward low complexity. Position 631 is a phosphothreonine (Thr631). Phosphoserine occurs at positions 802, 922, and 1012. Disordered regions lie at residues 993–1029 (AGLG…SMDP) and 1046–1069 (TAAT…EPSV). Residues 1011–1027 (VSPPIAPPSWVPDPPSM) are compositionally biased toward pro residues. Positions 1046–1067 (TAATGSGQGPSTSTIPGPSTEP) are enriched in polar residues. Thr1109 and Thr1129 each carry phosphothreonine. A UBR-type zinc finger spans residues 1171 to 1239 (DTCSFTWTGA…EKCKCKTLIA (69 aa)). 5 positions are modified to phosphoserine: Ser1221, Ser1302, Ser1349, Ser1369, and Ser1475. Residues 1293–1312 (REDRNRKTASPEDSDMPDHD) are disordered. Positions 1509 to 1734 (SVEPLPPRPS…PSSTSTPAAS (226 aa)) are disordered. Over residues 1518-1531 (SSDQASSSSQSQSS) the composition is skewed to low complexity. A compositionally biased stretch (polar residues) spans 1532 to 1547 (YIIRNPQQRRISQSQP). Ser1543 is subject to Phosphoserine. Composition is skewed to acidic residues over residues 1553–1568 (EEQD…EVEV) and 1599–1608 (HDEDGSDMEL). Residues 1623 to 1632 (NHSNQDNASG) are compositionally biased toward polar residues. Composition is skewed to low complexity over residues 1635–1651 (SVVT…ASSV), 1662–1675 (SNDS…SSQS), and 1720–1734 (AAST…PAAS). Thr1730 is subject to Phosphothreonine. Residue Ser1735 is modified to Phosphoserine. Tyr1740 carries the post-translational modification Phosphotyrosine. At Ser1774 the chain carries Phosphoserine. The tract at residues 1853–1884 (LASAGDPGHPNHPLHASQNSARRERMTAREEA) is disordered. A compositionally biased stretch (basic and acidic residues) spans 1873-1884 (ARRERMTAREEA). Thr1963 is modified (phosphothreonine). The segment at 1978–2015 (GIDNEDSEHENDDDTSQSATLNDKDDDSLPAETGQNHP) is disordered. Residues 1979–1992 (IDNEDSEHENDDDT) show a composition bias toward acidic residues. Ser1984, Ser2020, and Ser2022 each carry phosphoserine. Thr2024 is modified (phosphothreonine). Ser2070 bears the Phosphoserine mark. Residues 2111-2137 (RQKKEGEEQSLLAEEADSSKPGPSAPD) form a disordered region. The residue at position 2207 (Thr2207) is a Phosphothreonine. Ser2235 and Ser2283 each carry phosphoserine. A disordered region spans residues 2317 to 2387 (HTSLMQRLRN…SDDPDPLPAH (71 aa)). Basic and acidic residues-rich tracts occupy residues 2326 to 2342 (NRGE…EMRR) and 2350 to 2362 (SRRD…RRQL). The PABC domain maps to 2371–2448 (PASEGNPSDD…AMELIIAHGR (78 aa)). The HECT domain maps to 2455–2792 (ILDLGLLDSS…AIKTKNFGFV (338 aa)). Ser2463, Ser2477, and Ser2479 each carry phosphoserine. The interval 2467 to 2494 (VQENRKRHGSSRSVVDMDLEDTDDGDDN) is disordered. Residues 2483-2493 (MDLEDTDDGDD) are compositionally biased toward acidic residues. The active-site Glycyl thioester intermediate is the Cys2761.

It belongs to the UBR5 family. Homotetramer; composed of a dimer of dimers. Associates with CDK9 and TFIIS/TCEA1 and forms a transcription regulatory complex made of CDK9, RNAP II, UBR5 and TFIIS/TCEA1 that can stimulate target gene transcription (e.g. gamma fibrinogen/FGG) by recruiting their promoters. Associates with the E3 ligase complex containing DYRK2, EDD/UBR5, DDB1 and DCAF1 proteins (EDVP complex). Binds TOPBP1. Interacts with PIH1D1. Interacts with CIB1.

The protein localises to the nucleus. Its subcellular location is the cytoplasm. The enzyme catalyses S-ubiquitinyl-[E2 ubiquitin-conjugating enzyme]-L-cysteine + [acceptor protein]-L-lysine = [E2 ubiquitin-conjugating enzyme]-L-cysteine + N(6)-ubiquitinyl-[acceptor protein]-L-lysine.. It functions in the pathway protein modification; protein ubiquitination. In terms of biological role, E3 ubiquitin-protein ligase involved in different protein quality control pathways in the cytoplasm and nucleus. Mainly acts as a ubiquitin chain elongator that extends pre-ubiquitinated substrates. Component of the N-end rule pathway: ubiquitinates proteins bearing specific N-terminal residues that are destabilizing according to the N-end rule, leading to their degradation. Recognizes type-1 N-degrons, containing positively charged amino acids (Arg, Lys and His). Together with UBR4, part of a cytoplasm protein quality control pathway that prevents protein aggregation by catalyzing assembly of heterotypic 'Lys-11'-/'Lys-48'-linked branched ubiquitin chains on aggregated proteins, leading to substrate recognition by the segregase p97/VCP and degradation by the proteasome: UBR5 is probably branching multiple 'Lys-48'-linked chains of substrates initially modified with mixed conjugates by UBR4. Together with ITCH, catalyzes 'Lys-48'-/'Lys-63'-branched ubiquitination of TXNIP, leading to its degradation: UBR5 mediates branching of 'Lys-48'-linked chains of substrates initially modified with 'Lys-63'-linked conjugates by ITCH. Catalytic component of a nuclear protein quality control pathway that mediates ubiquitination and degradation of unpaired transcription factors (i.e. transcription factors that are not assembled into functional multiprotein complexes): specifically recognizes and binds degrons that are not accessible when transcription regulators are associated with their coactivators. Ubiquitinates various unpaired transcription regulator (MYC, SUPT4H1, SUPT5H, CDC20 and MCRS1), as well as ligand-bound nuclear receptors (ESR1, NR1H3, NR3C1, PGR, RARA, RXRA AND VDR) that are not associated with their nuclear receptor coactivators (NCOAs). Involved in maturation and/or transcriptional regulation of mRNA by mediating polyubiquitination and activation of CDK9. Also acts as a regulator of DNA damage response by acting as a suppressor of RNF168, an E3 ubiquitin-protein ligase that promotes accumulation of 'Lys-63'-linked histone H2A and H2AX at DNA damage sites, thereby acting as a guard against excessive spreading of ubiquitinated chromatin at damaged chromosomes. Regulates DNA topoisomerase II binding protein (TopBP1) in the DNA damage response. Ubiquitinates acetylated PCK1. Acts as a positive regulator of the canonical Wnt signaling pathway by mediating (1) ubiquitination and stabilization of CTNNB1, and (2) 'Lys-48'-linked ubiquitination and degradation of TLE3. Promotes disassembly of the mitotic checkpoint complex (MCC) from the APC/C complex by catalyzing ubiquitination of BUB1B, BUB3 and CDC20. Plays an essential role in extraembryonic development. Required for the maintenance of skeletal tissue homeostasis by acting as an inhibitor of hedgehog (HH) signaling. This chain is E3 ubiquitin-protein ligase UBR5, found in Mus musculus (Mouse).